A 141-amino-acid chain; its full sequence is Putative nickel-responsive regulator (141 aa).

Positions 80, 91, 93, and 99 each coordinate Ni(2+).

The protein belongs to the transcriptional regulatory CopG/NikR family. The cofactor is Ni(2+).

Transcriptional regulator. This chain is Putative nickel-responsive regulator, found in Methanococcus maripaludis (strain C6 / ATCC BAA-1332).